The following is a 715-amino-acid chain: Fatty acid oxidation complex subunit alpha (715 aa).

Residues 1–190 form an enoyl-CoA hydratase region; that stretch reads MTTTSAFMLS…KAGLVDDVVP (190 aa). The tract at residues 306–714 is 3-hydroxyacyl-CoA dehydrogenase; sequence GPLNSVGILG…FWTNGETDQG (409 aa).

The protein in the N-terminal section; belongs to the enoyl-CoA hydratase/isomerase family. This sequence in the central section; belongs to the 3-hydroxyacyl-CoA dehydrogenase family. As to quaternary structure, heterotetramer of two alpha chains (FadJ) and two beta chains (FadI).

The protein resides in the cytoplasm. The enzyme catalyses a (3S)-3-hydroxyacyl-CoA = a (2E)-enoyl-CoA + H2O. It carries out the reaction a 4-saturated-(3S)-3-hydroxyacyl-CoA = a (3E)-enoyl-CoA + H2O. The catalysed reaction is a (3S)-3-hydroxyacyl-CoA + NAD(+) = a 3-oxoacyl-CoA + NADH + H(+). It catalyses the reaction (3S)-3-hydroxybutanoyl-CoA = (3R)-3-hydroxybutanoyl-CoA. It participates in lipid metabolism; fatty acid beta-oxidation. Catalyzes the formation of a hydroxyacyl-CoA by addition of water on enoyl-CoA. Also exhibits 3-hydroxyacyl-CoA epimerase and 3-hydroxyacyl-CoA dehydrogenase activities. In Salmonella typhi, this protein is Fatty acid oxidation complex subunit alpha.